The following is a 568-amino-acid chain: 2-succinyl-5-enolpyruvyl-6-hydroxy-3-cyclohexene-1-carboxylate synthase (568 aa).

The protein belongs to the TPP enzyme family. MenD subfamily. In terms of assembly, homodimer. The cofactor is Mg(2+). Mn(2+) is required as a cofactor. Requires thiamine diphosphate as cofactor.

The enzyme catalyses isochorismate + 2-oxoglutarate + H(+) = 5-enolpyruvoyl-6-hydroxy-2-succinyl-cyclohex-3-ene-1-carboxylate + CO2. Its pathway is quinol/quinone metabolism; 1,4-dihydroxy-2-naphthoate biosynthesis; 1,4-dihydroxy-2-naphthoate from chorismate: step 2/7. The protein operates within quinol/quinone metabolism; menaquinone biosynthesis. Its function is as follows. Catalyzes the thiamine diphosphate-dependent decarboxylation of 2-oxoglutarate and the subsequent addition of the resulting succinic semialdehyde-thiamine pyrophosphate anion to isochorismate to yield 2-succinyl-5-enolpyruvyl-6-hydroxy-3-cyclohexene-1-carboxylate (SEPHCHC). The polypeptide is 2-succinyl-5-enolpyruvyl-6-hydroxy-3-cyclohexene-1-carboxylate synthase (Actinobacillus pleuropneumoniae serotype 5b (strain L20)).